The chain runs to 84 residues: Toxin-like TcoNTxP1 (84 aa).

Residues 1 to 19 (MKRMILFTSCLLLIDIVVG) form the signal peptide. The 62-residue stretch at 21–82 (KEGYPADSKG…VWDSATNKCG (62 aa)) folds into the LCN-type CS-alpha/beta domain. 4 disulfides stabilise this stretch: C31–C81, C35–C57, C43–C62, and C47–C64. A Cysteine amide modification is found at C81. A propeptide spanning residues 82-84 (GKK) is cleaved from the precursor.

Expressed by the venom gland.

The protein resides in the secreted. In terms of biological role, this protein is not toxic. It induces an immune response similar to that induced by whole venom. Thus, polyclonal antibodies raised against this protein can neutralize the effects of the venom. The polypeptide is Toxin-like TcoNTxP1 (Tityus costatus (Brazilian scorpion)).